The chain runs to 240 residues: Biosynthetic peptidoglycan transglycosylase (240 aa).

A helical membrane pass occupies residues 15–35 (WMFYLGAVVAIAWLATQAFYF).

Belongs to the glycosyltransferase 51 family.

It localises to the cell inner membrane. It carries out the reaction [GlcNAc-(1-&gt;4)-Mur2Ac(oyl-L-Ala-gamma-D-Glu-L-Lys-D-Ala-D-Ala)](n)-di-trans,octa-cis-undecaprenyl diphosphate + beta-D-GlcNAc-(1-&gt;4)-Mur2Ac(oyl-L-Ala-gamma-D-Glu-L-Lys-D-Ala-D-Ala)-di-trans,octa-cis-undecaprenyl diphosphate = [GlcNAc-(1-&gt;4)-Mur2Ac(oyl-L-Ala-gamma-D-Glu-L-Lys-D-Ala-D-Ala)](n+1)-di-trans,octa-cis-undecaprenyl diphosphate + di-trans,octa-cis-undecaprenyl diphosphate + H(+). Its pathway is cell wall biogenesis; peptidoglycan biosynthesis. Functionally, peptidoglycan polymerase that catalyzes glycan chain elongation from lipid-linked precursors. In Paraburkholderia xenovorans (strain LB400), this protein is Biosynthetic peptidoglycan transglycosylase.